A 179-amino-acid chain; its full sequence is Disulfide bond formation protein B (179 aa).

Topologically, residues 1-14 (MLSYFKELSLNRTA) are cytoplasmic. The helical transmembrane segment at 15–31 (WLLLAFVAFALEASAIY) threads the bilayer. At 32-49 (FQYGMGLVPCVMCVYERL) the chain is on the periplasmic side. C41 and C44 are disulfide-bonded. The helical transmembrane segment at 50–65 (AIFGLLIAGLVGAISP) threads the bilayer. The Cytoplasmic portion of the chain corresponds to 66-72 (RFFLTRW). The helical transmembrane segment at 73–90 (LALLLWGFSAFKGLALAI) threads the bilayer. Topologically, residues 91 to 146 (KHHDYQANPSPWNQCEFKPEFPQTMPFDQWFPSIFAPGPVNCSEKQWEMFGLGMPE) are periplasmic. A disulfide bond links C105 and C132. The helical transmembrane segment at 147-165 (WLILAFSIFALMFVIVLLS) threads the bilayer. The Cytoplasmic segment spans residues 166–179 (QFKRAKPQYRSVFR).

Belongs to the DsbB family.

The protein localises to the cell inner membrane. Its function is as follows. Required for disulfide bond formation in some periplasmic proteins. Acts by oxidizing the DsbA protein. The polypeptide is Disulfide bond formation protein B (Actinobacillus pleuropneumoniae serotype 5b (strain L20)).